A 318-amino-acid polypeptide reads, in one-letter code: Porphobilinogen deaminase (318 aa).

Cys-241 bears the S-(dipyrrolylmethanemethyl)cysteine mark.

Belongs to the HMBS family. Monomer. Requires dipyrromethane as cofactor.

It carries out the reaction 4 porphobilinogen + H2O = hydroxymethylbilane + 4 NH4(+). Its pathway is porphyrin-containing compound metabolism; protoporphyrin-IX biosynthesis; coproporphyrinogen-III from 5-aminolevulinate: step 2/4. Functionally, tetrapolymerization of the monopyrrole PBG into the hydroxymethylbilane pre-uroporphyrinogen in several discrete steps. The polypeptide is Porphobilinogen deaminase (Geobacter sulfurreducens (strain ATCC 51573 / DSM 12127 / PCA)).